The sequence spans 355 residues: Uroporphyrinogen decarboxylase (355 aa).

Residues 27–31 (RQAGR), Asp-78, Tyr-155, Ser-210, and His-328 each bind substrate.

This sequence belongs to the uroporphyrinogen decarboxylase family. Homodimer.

It localises to the cytoplasm. It carries out the reaction uroporphyrinogen III + 4 H(+) = coproporphyrinogen III + 4 CO2. It functions in the pathway porphyrin-containing compound metabolism; protoporphyrin-IX biosynthesis; coproporphyrinogen-III from 5-aminolevulinate: step 4/4. Catalyzes the decarboxylation of four acetate groups of uroporphyrinogen-III to yield coproporphyrinogen-III. The sequence is that of Uroporphyrinogen decarboxylase from Pseudomonas paraeruginosa (strain DSM 24068 / PA7) (Pseudomonas aeruginosa (strain PA7)).